An 87-amino-acid polypeptide reads, in one-letter code: Defensin-A (87 aa).

The N-terminal stretch at 1 to 19 (MKFYLVLAFLTLCAVAVTA) is a signal peptide. Residues 20 to 44 (LPAGDETRIDLETLEEDLRLVDGAQ) constitute a propeptide that is removed on maturation. 3 disulfide bridges follow: cysteine 57/cysteine 78, cysteine 64/cysteine 83, and cysteine 68/cysteine 85.

Hemolymph and fat body.

It is found in the secreted. In terms of biological role, antibacterial peptide mostly active against Gram-positive and Gram negative bacteria. The protein is Defensin-A of Glossina morsitans morsitans (Savannah tsetse fly).